We begin with the raw amino-acid sequence, 673 residues long: UvrABC system protein B (673 aa).

The region spanning 26–183 (EGLEDGLAHQ…RRLAELQYAR (158 aa)) is the Helicase ATP-binding domain. Residue 39–46 (GVTGSGKT) participates in ATP binding. A Beta-hairpin motif is present at residues 92–115 (YYDYYQPEAYVPSSDTFIEKDASV). Residues 431-597 (QVDDLLSEIR…GLNKKVVDIL (167 aa)) enclose the Helicase C-terminal domain. Positions 608–627 (AKGRGKSRPIVEPDNVPMDM) are disordered. The region spanning 633-668 (QQKIHELEGLMMQHAQNLEFEEAAQIRDQLHQLRDL) is the UVR domain.

Belongs to the UvrB family. In terms of assembly, forms a heterotetramer with UvrA during the search for lesions. Interacts with UvrC in an incision complex.

Its subcellular location is the cytoplasm. Functionally, the UvrABC repair system catalyzes the recognition and processing of DNA lesions. A damage recognition complex composed of 2 UvrA and 2 UvrB subunits scans DNA for abnormalities. Upon binding of the UvrA(2)B(2) complex to a putative damaged site, the DNA wraps around one UvrB monomer. DNA wrap is dependent on ATP binding by UvrB and probably causes local melting of the DNA helix, facilitating insertion of UvrB beta-hairpin between the DNA strands. Then UvrB probes one DNA strand for the presence of a lesion. If a lesion is found the UvrA subunits dissociate and the UvrB-DNA preincision complex is formed. This complex is subsequently bound by UvrC and the second UvrB is released. If no lesion is found, the DNA wraps around the other UvrB subunit that will check the other stand for damage. The polypeptide is UvrABC system protein B (Escherichia coli O7:K1 (strain IAI39 / ExPEC)).